Here is a 293-residue protein sequence, read N- to C-terminus: Ribosomal protein L11 methyltransferase (293 aa).

Residues Thr-145, Gly-166, Asp-188, and Asn-230 each coordinate S-adenosyl-L-methionine.

The protein belongs to the methyltransferase superfamily. PrmA family.

It is found in the cytoplasm. It catalyses the reaction L-lysyl-[protein] + 3 S-adenosyl-L-methionine = N(6),N(6),N(6)-trimethyl-L-lysyl-[protein] + 3 S-adenosyl-L-homocysteine + 3 H(+). Methylates ribosomal protein L11. The chain is Ribosomal protein L11 methyltransferase from Yersinia pseudotuberculosis serotype I (strain IP32953).